A 176-amino-acid chain; its full sequence is Large ribosomal subunit protein uL6 (176 aa).

This sequence belongs to the universal ribosomal protein uL6 family. As to quaternary structure, part of the 50S ribosomal subunit.

Functionally, this protein binds to the 23S rRNA, and is important in its secondary structure. It is located near the subunit interface in the base of the L7/L12 stalk, and near the tRNA binding site of the peptidyltransferase center. This Lactobacillus acidophilus (strain ATCC 700396 / NCK56 / N2 / NCFM) protein is Large ribosomal subunit protein uL6.